Consider the following 399-residue polypeptide: 3-dehydroquinate synthase (399 aa).

It belongs to the archaeal-type DHQ synthase family.

The catalysed reaction is 2-amino-2,3,7-trideoxy-D-lyxo-hept-6-ulosonate + NAD(+) + H2O = 3-dehydroquinate + NH4(+) + NADH + H(+). Its function is as follows. Catalyzes the oxidative deamination and cyclization of 2-amino-3,7-dideoxy-D-threo-hept-6-ulosonic acid (ADH) to yield 3-dehydroquinate (DHQ), which is fed into the canonical shikimic pathway of aromatic amino acid biosynthesis. The polypeptide is 3-dehydroquinate synthase (Haloquadratum walsbyi (strain DSM 16790 / HBSQ001)).